A 651-amino-acid polypeptide reads, in one-letter code: MLDRIGPGFQDLCRQVLPTLPSLSQEEVSTIWGNVSDFVERQLTMHKGVQISGLGTFTFTRQQLEMGNKKFVLVQRPVFIMSEKLVQTHGLKQNKVFSPGDIPVVPLNFVMISLEGPFNRDTIEGCVRETLLFLSRSISIKQNVEFTFKGIGVLSIRDNKVKMRFYKDFLSSVDGSGTLTKALANRPGTMDSVLSSRESFGKRPNSALAFPRIEHKETENKPPVEVFGEEGGENRPRKSKLKDQSDKEEGAWEISSAKKHRDRQSISPAKVTSGSLLDKFERSGNGGKITENLSPGGQRNDNEKPKTSPAPACQDHNKAGQEMCYVCLQRAQRNFALYYGDEKRRREIEDERLMQQYQIAKDQEAFFKSQMKSMATREQNQKNAAYNLGVAEAIRSHKNEKPDFYKSFLFDKRPLSPEINAFKQEEYSQSLLKQMESKREKEIKQRQNRELMDRLEQVQLTEELAAQRAQYLKEKMEETQYYKRALDAQVKNKPSQLPMFEPDSAEPIFGKNEGEMEMEKRKREQSCMKHQMEAAANLKRNTILNQLVDQRRDLQMLQRTKREHLADRAAEVDRVNRLNQCLQEDWDRSLAMKKQRDLEEKAFERASDKLFLLDQCEKYRRCRQCQRRTSNTGESNVWPLNKFLQGSRLLV.

The disordered stretch occupies residues 194 to 314 (LSSRESFGKR…PKTSPAPACQ (121 aa)). Phosphoserine is present on Ser-206. Basic and acidic residues-rich tracts occupy residues 212 to 222 (RIEHKETENKP) and 232 to 250 (GENRPRKSKLKDQSDKEEG). The span at 265–275 (SISPAKVTSGS) shows a compositional bias: polar residues. A phosphoserine mark is found at Ser-273, Ser-275, Ser-294, and Ser-416. 2 coiled-coil regions span residues 428-465 (SQSLLKQMESKREKEIKQRQNRELMDRLEQVQLTEELA) and 539-566 (KRNTILNQLVDQRRDLQMLQRTKREHLA).

It is found in the cytoplasm. The protein resides in the cytoskeleton. Its subcellular location is the microtubule organizing center. It localises to the centrosome. This chain is Coiled-coil domain-containing protein 81 (Ccdc81), found in Rattus norvegicus (Rat).